Here is a 309-residue protein sequence, read N- to C-terminus: NAD kinase (309 aa).

Asp89 serves as the catalytic Proton acceptor. Residues 89 to 90, 163 to 164, His174, Arg191, Asp193, and 204 to 209 contribute to the NAD(+) site; these read DG, NE, and TAYALS.

The protein belongs to the NAD kinase family. A divalent metal cation is required as a cofactor.

The protein localises to the cytoplasm. The enzyme catalyses NAD(+) + ATP = ADP + NADP(+) + H(+). In terms of biological role, involved in the regulation of the intracellular balance of NAD and NADP, and is a key enzyme in the biosynthesis of NADP. Catalyzes specifically the phosphorylation on 2'-hydroxyl of the adenosine moiety of NAD to yield NADP. This Shewanella sp. (strain MR-4) protein is NAD kinase.